A 332-amino-acid chain; its full sequence is Adenosine receptor A2b (332 aa).

At 1–8 (MLLETQDA) the chain is on the extracellular side. Residues 9–33 (LYVALELVIAALSVAGNVLVCAAVG) form a helical membrane-spanning segment. Residues 34 to 43 (TANTLQTPTN) are Cytoplasmic-facing. The chain crosses the membrane as a helical span at residues 44–67 (YFLVSLAAADVAVGLFAIPFAITI). The Extracellular portion of the chain corresponds to 68 to 78 (SLGFCTDFYGC). C78 and C171 are joined by a disulfide. Residues 79 to 101 (LFLACFVLVLTQSSIFSLLAVAV) form a helical membrane-spanning segment. Residues 102-121 (DRYLAICVPLRYKSLVTGTR) lie on the Cytoplasmic side of the membrane. A helical membrane pass occupies residues 122–144 (ARGVIAVLWVLAFGIGLTPFLGW). The Extracellular segment spans residues 145–178 (NSKDSATNNCTEPWDGTTNESCCLVKCLFENVVP). N-linked (GlcNAc...) asparagine glycans are attached at residues N153 and N163. E174 contributes to the adenosine binding site. The helical transmembrane segment at 179–203 (MSYMVYFNFFGCVLPPLLIMLVIYI) threads the bilayer. Topologically, residues 204–235 (KIFLVACRQLQRTELMDHSRTTLQREIHAAKS) are cytoplasmic. A helical transmembrane segment spans residues 236–259 (LAMIVGIFALCWLPVHAVNCVTLF). Residue N254 participates in adenosine binding. The Extracellular segment spans residues 260–267 (QPAQGKNK). Residues 268-291 (PKWAMNMAILLSHANSVVNPIVYA) form a helical membrane-spanning segment. S279 and H280 together coordinate adenosine. The Cytoplasmic segment spans residues 292 to 332 (YRNRDFRYTFHKIISRYLLCQADVKSGNGQAGVQPALGVGL). C311 carries the S-palmitoyl cysteine lipid modification.

It belongs to the G-protein coupled receptor 1 family.

Its subcellular location is the cell membrane. Functionally, receptor for adenosine. The activity of this receptor is mediated by G proteins which activate adenylyl cyclase. The sequence is that of Adenosine receptor A2b (ADORA2B) from Homo sapiens (Human).